The chain runs to 910 residues: DNA mismatch repair protein MutS (910 aa).

An ATP-binding site is contributed by 658–665 (GPNMGGKS).

Belongs to the DNA mismatch repair MutS family.

This protein is involved in the repair of mismatches in DNA. It is possible that it carries out the mismatch recognition step. This protein has a weak ATPase activity. This chain is DNA mismatch repair protein MutS, found in Brucella anthropi (strain ATCC 49188 / DSM 6882 / CCUG 24695 / JCM 21032 / LMG 3331 / NBRC 15819 / NCTC 12168 / Alc 37) (Ochrobactrum anthropi).